Consider the following 454-residue polypeptide: tRNA(Ile)-lysidine synthase (454 aa).

31-36 (SGGADS) contacts ATP.

This sequence belongs to the tRNA(Ile)-lysidine synthase family.

It localises to the cytoplasm. The catalysed reaction is cytidine(34) in tRNA(Ile2) + L-lysine + ATP = lysidine(34) in tRNA(Ile2) + AMP + diphosphate + H(+). Its function is as follows. Ligates lysine onto the cytidine present at position 34 of the AUA codon-specific tRNA(Ile) that contains the anticodon CAU, in an ATP-dependent manner. Cytidine is converted to lysidine, thus changing the amino acid specificity of the tRNA from methionine to isoleucine. The polypeptide is tRNA(Ile)-lysidine synthase (Porphyromonas gingivalis (strain ATCC BAA-308 / W83)).